Here is a 219-residue protein sequence, read N- to C-terminus: MSALHSIPHRSKKLPPLRVGVGGPVGSGKTTLVEMLCKSMRERWDLVVVTNDIYTKEDQRLLTVSGALEPERIMGVETGGCPHTAIREDASINLEAVDRMLAKFPNADIVFIESGGDNLAATFSPELSDLTIYVIDVAAGEKIPRKGGPGITKSDLFVINKTDLAPHVGADLAVMEADTQRMRPAHASSRPYVMTNLKTRAGLAEVVSFIERRGLLHAA.

A disordered region spans residues 1–20 (MSALHSIPHRSKKLPPLRVG). A GTP-binding site is contributed by 23–30 (GPVGSGKT).

This sequence belongs to the SIMIBI class G3E GTPase family. UreG subfamily. Homodimer. UreD, UreF and UreG form a complex that acts as a GTP-hydrolysis-dependent molecular chaperone, activating the urease apoprotein by helping to assemble the nickel containing metallocenter of UreC. The UreE protein probably delivers the nickel.

It is found in the cytoplasm. Its function is as follows. Facilitates the functional incorporation of the urease nickel metallocenter. This process requires GTP hydrolysis, probably effectuated by UreG. In Methylibium petroleiphilum (strain ATCC BAA-1232 / LMG 22953 / PM1), this protein is Urease accessory protein UreG.